We begin with the raw amino-acid sequence, 271 residues long: Aquaporin-2 (271 aa).

Topologically, residues 1–11 (MWELRSIAFSR) are cytoplasmic. A helical membrane pass occupies residues 12–32 (AVFAEFLATLLFVFFGLGSAL). The Extracellular portion of the chain corresponds to 33-40 (NWPQALPS). Residues 41 to 59 (VLQIAMAFGLGIGTLVQAL) traverse the membrane as a helical segment. The Cytoplasmic segment spans residues 60–64 (GHISG). The segment at residues 65-74 (AHINPAVTVA) is an intramembrane region (discontinuously helical). Residues 68 to 70 (NPA) carry the NPA 1 motif. Topologically, residues 75 to 85 (CLVGCHVSVLR) are cytoplasmic. Residues 86 to 107 (AAFYVAAQLLGAVAGAALLHEI) form a helical membrane-spanning segment. Over 108–127 (TPADIRGDLAVNALSNSTTA) the chain is Extracellular. N123 carries N-linked (GlcNAc...) asparagine glycosylation. Residues 128 to 148 (GQAVTVELFLTLQLVLCIFAS) form a helical membrane-spanning segment. Over 149–156 (TDERRGEN) the chain is Cytoplasmic. The helical transmembrane segment at 157–176 (PGTPALSIGFSVALGHLLGI) threads the bilayer. The Extracellular portion of the chain corresponds to 177–180 (HYTG). The discontinuously helical intramembrane region spans 181–193 (CSMNPARSLAPAV). The short motif at 184 to 186 (NPA) is the NPA 2 element. The Extracellular portion of the chain corresponds to 194 to 201 (VTGKFDDH). A helical transmembrane segment spans residues 202-222 (WVFWIGPLVGAILGSLLYNYV). At 223–271 (LFPPAKSLSERLAVLKGLEPDTDWEEREVRRRQSVELHSPQSLPRGTKA) the chain is on the cytoplasmic side. Residues 248 to 271 (EREVRRRQSVELHSPQSLPRGTKA) form a disordered region. Position 256 is a phosphoserine; by PKA (S256). The segment covering 261-271 (SPQSLPRGTKA) has biased composition (polar residues).

This sequence belongs to the MIP/aquaporin (TC 1.A.8) family. As to quaternary structure, homotetramer. Interacts with micropeptide MIAC; the interaction leads to a reduction of filamentous actin fibers and inhibition of the EREG/EGFR signaling pathway. Post-translationally, ser-256 phosphorylation is necessary and sufficient for expression at the apical membrane. Endocytosis is not phosphorylation-dependent. In terms of processing, N-glycosylated. As to expression, expressed in collecting tubules in kidney medulla (at protein level). Detected in kidney.

Its subcellular location is the apical cell membrane. It is found in the basolateral cell membrane. The protein resides in the cell membrane. The protein localises to the cytoplasmic vesicle membrane. It localises to the golgi apparatus. Its subcellular location is the trans-Golgi network membrane. The catalysed reaction is H2O(in) = H2O(out). It carries out the reaction glycerol(in) = glycerol(out). Functionally, forms a water-specific channel that provides the plasma membranes of renal collecting duct with high permeability to water, thereby permitting water to move in the direction of an osmotic gradient. Plays an essential role in renal water homeostasis. Could also be permeable to glycerol. The chain is Aquaporin-2 from Homo sapiens (Human).